A 291-amino-acid polypeptide reads, in one-letter code: NAD kinase (291 aa).

D73 (proton acceptor) is an active-site residue. Residues 73–74 (DG), 147–148 (ND), R175, D177, 188–193 (TAYALS), A212, and Q246 each bind NAD(+).

The protein belongs to the NAD kinase family. Requires a divalent metal cation as cofactor.

The protein resides in the cytoplasm. It catalyses the reaction NAD(+) + ATP = ADP + NADP(+) + H(+). Functionally, involved in the regulation of the intracellular balance of NAD and NADP, and is a key enzyme in the biosynthesis of NADP. Catalyzes specifically the phosphorylation on 2'-hydroxyl of the adenosine moiety of NAD to yield NADP. This chain is NAD kinase, found in Polaromonas sp. (strain JS666 / ATCC BAA-500).